Here is a 1755-residue protein sequence, read N- to C-terminus: MASELEPEVQAIDRSLLECSAEEIAGKWLQATDLTREVYQHLAHYVPKIYCRGPNPFPQKEDMLAQHVLLGPMEWYLCGEDPAFGFPKLEQANKPSHLCGRVFKVGEPTYSCRDCAVDPTCVLCMECFLGSIHRDHRYRMTTSGGGGFCDCGDTEAWKEGPYCQKHELNTSEIEEEEDPLVHLSEDVIARTYNIFAITFRYAVEILTWEKESELPADLEMVEKSDTYYCMLFNDEVHTYEQVIYTLQKAVNCTQKEAIGFATTVDRDGRRSVRYGDFQYCEQAKSVIVRNTSRQTKPLKVQVMHSSIVAHQNFGLKLLSWLGSIIGYSDGLRRILCQVGLQEGPDGENSSLVDRLMLSDSKLWKGARSVYHQLFMSSLLMDLKYKKLFAVRFAKNYQQLQRDFMEDDHERAVSVTALSVQFFTAPTLARMLITEENLMSIIIKTFMDHLRHRDAQGRFQFERYTALQAFKFRRVQSLILDLKYVLISKPTEWSDELRQKFLEGFDAFLELLKCMQGMDPITRQVGQHIEMEPEWEAAFTLQMKLTHVISMMQDWCASDEKVLIEAYKKCLAVLMQCHGGYTDGEQPITLSICGHSVETIRYCVSQEKVSIHLPVSRLLAGLHVLLSKSEVAYKFPELLPLSELSPPMLIEHPLRCLVLCAQVHAGMWRRNGFSLVNQIYYYHNVKCRREMFDKDVVMLQTGVSMMDPNHFLMIMLSRFELYQIFSTPDYGKRFSSEITHKDVVQQNNTLIEEMLYLIIMLVGERFSPGVGQVNATDEIKREIIHQLSIKPMAHSELVKSLPEDENKETGMESVIEAVAHFKKPGLTGRGMYELKPECAKEFNLYFYHFSRAEQSKAEEAQRKLKRQNREDTALPPPVLPPFCPLFASLVNILQSDVMLCIMGTILQWAVEHNGYAWSESMLQRVLHLIGMALQEEKQHLENVTEEHVVTFTFTQKISKPGEAPKNSPSILAMLETLQNAPYLEVHKDMIRWILKTFNAVKKMRESSPTSPVAETEGTIMEESSRDKDKAERKRKAEIARLRREKIMAQMSEMQRHFIDENKELFQQTLELDASTSAVLDHSPVASDMTLTALGPAQTQVPEQRQFVTCILCQEEQEVKVESRAMVLAAFVQRSTVLSKNRSKFIQDPEKYDPLFMHPDLSCGTHTSSCGHIMHAHCWQRYFDSVQAKEQRRQQRLRLHTSYDVENGEFLCPLCECLSNTVIPLLLPPRNIFNNRLNFSDQPNLTQWIRTISQQIKALQFLRKEESTPNNASTKNSENVDELQLPEGFRPDFRPKIPYSESIKEMLTTFGTATYKVGLKVHPNEEDPRVPIMCWGSCAYTIQSIERILSDEDKPLFGPLPCRLDDCLRSLTRFAAAHWTVASVSVVQGHFCKLFASLVPNDSHEELPCILDIDMFHLLVGLVLAFPALQCQDFSGISLGTGDLHIFHLVTMAHIIQILLTSCTEENGMDQENPPCEEESAVLALYKTLHQYTGSALKEIPSGWHLWRSVRAGIMPFLKCSALFFHYLNGVPSPPDIQVPGTSHFEHLCSYLSLPNNLICLFQENSEIMNSLIESWCRNSEVKRYLEGERDAIRYPRESNKLINLPEDYSSLINQASNFSCPKSGGDKSRAPTLCLVCGSLLCSQSYCCQTELEGEDVGACTAHTYSCGSGVGIFLRVRECQVLFLAGKTKGCFYSPPYLDDYGETDQGLRRGNPLHLCKERFKKIQKLWHQHSVTEEIGHAQEANQTLVGIDWQHL.

Alanine 2 carries the post-translational modification N-acetylalanine. Residue lysine 94 forms a Glycyl lysine isopeptide (Lys-Gly) (interchain with G-Cter in ubiquitin) linkage. The UBR-type zinc finger occupies 97 to 168; the sequence is HLCGRVFKVG…EGPYCQKHEL (72 aa). Residues cysteine 99, cysteine 112, cysteine 115, cysteine 124, cysteine 127, histidine 133, and histidine 136 each coordinate Zn(2+). Phenylalanine 148 is a binding site for a peptide. Cysteine 149 is a binding site for Zn(2+). Position 150 (aspartate 150) interacts with a peptide. A Zn(2+)-binding site is contributed by cysteine 151. Aspartate 153 is a binding site for a peptide. Lysine 158 participates in a covalent cross-link: Glycyl lysine isopeptide (Lys-Gly) (interchain with G-Cter in ubiquitin). Cysteine 163 lines the Zn(2+) pocket. Residue lysine 165 forms a Glycyl lysine isopeptide (Lys-Gly) (interchain with G-Cter in ubiquitin) linkage. Histidine 166 contributes to the Zn(2+) binding site. Residues lysine 248, lysine 255, and lysine 470 each participate in a glycyl lysine isopeptide (Lys-Gly) (interchain with G-Cter in ubiquitin) cross-link. At serine 476 the chain carries Phosphoserine. Residues lysine 488, lysine 568, lysine 779, and lysine 789 each participate in a glycyl lysine isopeptide (Lys-Gly) (interchain with G-Cter in ubiquitin) cross-link. Residues 1004 to 1034 are disordered; the sequence is ESSPTSPVAETEGTIMEESSRDKDKAERKRK. The stretch at 1019 to 1054 forms a coiled coil; sequence MEESSRDKDKAERKRKAEIARLRREKIMAQMSEMQR. Basic and acidic residues predominate over residues 1021–1034; that stretch reads ESSRDKDKAERKRK. Residues cysteine 1108, cysteine 1111, cysteine 1168, histidine 1170, histidine 1173, cysteine 1176, cysteine 1210, and cysteine 1213 each coordinate Zn(2+). An RING-type; atypical zinc finger spans residues 1108 to 1214; the sequence is CILCQEEQEV…NGEFLCPLCE (107 aa). The segment at 1261–1287 is disordered; sequence RKEESTPNNASTKNSENVDELQLPEGF. A compositionally biased stretch (polar residues) spans 1266 to 1275; the sequence is TPNNASTKNS. Glycyl lysine isopeptide (Lys-Gly) (interchain with G-Cter in ubiquitin) cross-links involve residues lysine 1496, lysine 1599, and lysine 1689. Residue serine 1694 is modified to Phosphoserine. Phosphotyrosine is present on tyrosine 1697.

This sequence belongs to the E3 ubiquitin-protein ligase UBR1-like family. Interacts with UBE2B; promotes the UBE2B-H2A interaction and the ubiquitination of histone H2A by UBE2B and UBR2. Interacts with RECQL4. Interacts with TEX19; does not lead to TEX19 degradation and stabilizes it. Interacts with CASP8. Interacts with ATXN3. Interacts with UBE2O. Dephosphorylated by DUSP22 at Ser-1694 and Tyr-1697, leading to subsequent ubiquitination and proteasomal degradation. Post-translationally, 'Lys-48'-linked ubiquitinated at Lys-94, Lys-779 and Lys-1599 following DUSP22-mediated dephosphorylation of Ser-1694 and Tyr-1697 which promotes UBR2 interaction with the SCF(FBW1A) E3 ubiquitin-protein ligase complex. In terms of tissue distribution, broadly expressed, with highest levels in skeletal muscle, kidney and pancreas. Present in acinar cells of the pancreas (at protein level).

The protein resides in the nucleus. The protein localises to the chromosome. It catalyses the reaction S-ubiquitinyl-[E2 ubiquitin-conjugating enzyme]-L-cysteine + [acceptor protein]-L-lysine = [E2 ubiquitin-conjugating enzyme]-L-cysteine + N(6)-ubiquitinyl-[acceptor protein]-L-lysine.. It functions in the pathway protein modification; protein ubiquitination. Functionally, E3 ubiquitin-protein ligase which is a component of the N-end rule pathway. Recognizes and binds to proteins bearing specific N-terminal residues (N-degrons) that are destabilizing according to the N-end rule, leading to their ubiquitination and subsequent degradation. Recognizes both type-1 and type-2 N-degrons, containing positively charged amino acids (Arg, Lys and His) and bulky and hydrophobic amino acids, respectively. Does not ubiquitinate proteins that are acetylated at the N-terminus. In contrast, it strongly binds methylated N-degrons. Plays a critical role in chromatin inactivation and chromosome-wide transcriptional silencing during meiosis via ubiquitination of histone H2A. Binds leucine and is a negative regulator of the leucine-mTOR signaling pathway, thereby controlling cell growth. Required for spermatogenesis, promotes, with Tex19.1, SPO11-dependent recombination foci to accumulate and drive robust homologous chromosome synapsis. Polyubiquitinates LINE-1 retrotransposon encoded, LIRE1, which induces degradation, inhibiting LINE-1 retrotransposon mobilization. Catalyzes ubiquitination and degradation of the N-terminal part of NLRP1 following NLRP1 activation by pathogens and other damage-associated signals: ubiquitination promotes degradation of the N-terminal part and subsequent release of the cleaved C-terminal part of NLRP1, which polymerizes and forms the NLRP1 inflammasome followed by host cell pyroptosis. Plays a role in T-cell receptor signaling by inducing 'Lys-63'-linked ubiquitination of lymphocyte cell-specific kinase LCK. This activity is regulated by DUSP22, which induces 'Lys-48'-linked ubiquitination of UBR2, leading to its proteasomal degradation by SCF E3 ubiquitin-protein ligase complex. The sequence is that of E3 ubiquitin-protein ligase UBR2 (UBR2) from Homo sapiens (Human).